The sequence spans 339 residues: tRNA N6-adenosine threonylcarbamoyltransferase (339 aa).

Residues His-111 and His-115 each coordinate Fe cation. Substrate contacts are provided by residues 139-143 (LVSGG), Asp-172, Gly-185, Asp-189, and Asn-280. Fe cation is bound at residue Asp-308.

The protein belongs to the KAE1 / TsaD family. Fe(2+) is required as a cofactor.

It localises to the cytoplasm. It carries out the reaction L-threonylcarbamoyladenylate + adenosine(37) in tRNA = N(6)-L-threonylcarbamoyladenosine(37) in tRNA + AMP + H(+). In terms of biological role, required for the formation of a threonylcarbamoyl group on adenosine at position 37 (t(6)A37) in tRNAs that read codons beginning with adenine. Is involved in the transfer of the threonylcarbamoyl moiety of threonylcarbamoyl-AMP (TC-AMP) to the N6 group of A37, together with TsaE and TsaB. TsaD likely plays a direct catalytic role in this reaction. This Bacteroides thetaiotaomicron (strain ATCC 29148 / DSM 2079 / JCM 5827 / CCUG 10774 / NCTC 10582 / VPI-5482 / E50) protein is tRNA N6-adenosine threonylcarbamoyltransferase.